We begin with the raw amino-acid sequence, 104 residues long: SOSS complex subunit C (104 aa).

The residue at position 2 (A2) is an N-acetylalanine.

This sequence belongs to the SOSS-C family. As to quaternary structure, component of the SOSS complex, composed of SOSS-B (SOSS-B1/NABP2 or SOSS-B2/NABP1), SOSS-A/INTS3 and SOSS-C/INIP. SOSS complexes containing SOSS-B1/NABP2 are more abundant than complexes containing SOSS-B2/NABP1. Interacts with INTS3; the interaction is direct.

The protein localises to the nucleus. Functionally, component of the SOSS complex, a multiprotein complex that functions downstream of the MRN complex to promote DNA repair and G2/M checkpoint. The SOSS complex associates with single-stranded DNA at DNA lesions and influences diverse endpoints in the cellular DNA damage response including cell-cycle checkpoint activation, recombinational repair and maintenance of genomic stability. Required for efficient homologous recombination-dependent repair of double-strand breaks (DSBs) and ATM-dependent signaling pathways. In Bos taurus (Bovine), this protein is SOSS complex subunit C (INIP).